Here is a 197-residue protein sequence, read N- to C-terminus: Ribosomal RNA large subunit methyltransferase E (197 aa).

Residues G50, W52, D70, D88, and D111 each contribute to the S-adenosyl-L-methionine site. Residue K151 is the Proton acceptor of the active site.

The protein belongs to the class I-like SAM-binding methyltransferase superfamily. RNA methyltransferase RlmE family.

It localises to the cytoplasm. It catalyses the reaction uridine(2552) in 23S rRNA + S-adenosyl-L-methionine = 2'-O-methyluridine(2552) in 23S rRNA + S-adenosyl-L-homocysteine + H(+). Specifically methylates the uridine in position 2552 of 23S rRNA at the 2'-O position of the ribose in the fully assembled 50S ribosomal subunit. This Syntrophobacter fumaroxidans (strain DSM 10017 / MPOB) protein is Ribosomal RNA large subunit methyltransferase E.